The primary structure comprises 422 residues: Leucine-rich repeat protein 1 (422 aa).

LRR repeat units follow at residues 184 to 207, 209 to 230, 233 to 258, 260 to 279, 280 to 301, and 304 to 327; these read LKNLTKLDLSHNCIKKLPATIGDL, HLQELNLNDNQLETFSVPLCTS, QKSLHSLDLSKNKIKALPVQFCQFRE, TNLNLNDNELIHLPFKIGQL, TNLRFLSAARNKLRNLPSEFKM, and LEYLDLFGNTFEKPEVIPIIKLQV.

Component of the probable ECS(LRR1) E3 ubiquitin-protein ligase complex which contains CUL2, RBX1, Elongin BC complex and LRR1. Interacts with CUL2, RBX1, ELOB and ELOC.

The protein localises to the nucleus. Its pathway is protein modification; protein ubiquitination. In terms of biological role, substrate recognition subunit of an ECS (Elongin BC-CUL2/5-SOCS-box protein) E3 ubiquitin-protein ligase complex which mediates the ubiquitination and subsequent proteasomal degradation of target proteins. ECS(LRR1) ubiquitinates MCM7 and promotes CMG replisome disassembly by VCP and chromatin extraction during S-phase. May negatively regulate the 4-1BB-mediated signaling cascades which result in the activation of NK-kappaB and JNK1. This chain is Leucine-rich repeat protein 1, found in Mus musculus (Mouse).